The primary structure comprises 413 residues: Adenylosuccinate synthetase (413 aa).

Residues 11 to 17 (GDEGKGK) and 39 to 41 (GHT) contribute to the GTP site. Asp-12 serves as the catalytic Proton acceptor. Mg(2+) is bound by residues Asp-12 and Gly-39. Residues 12 to 15 (DEGK), 37 to 40 (NAGH), Thr-125, Arg-139, Gln-217, Thr-232, and Arg-296 contribute to the IMP site. Catalysis depends on His-40, which acts as the Proton donor. 292–298 (TTTGRPR) is a substrate binding site. GTP is bound by residues Arg-298, 324 to 326 (KLD), and 402 to 404 (STG).

The protein belongs to the adenylosuccinate synthetase family. As to quaternary structure, homodimer. It depends on Mg(2+) as a cofactor.

It localises to the cytoplasm. The enzyme catalyses IMP + L-aspartate + GTP = N(6)-(1,2-dicarboxyethyl)-AMP + GDP + phosphate + 2 H(+). It functions in the pathway purine metabolism; AMP biosynthesis via de novo pathway; AMP from IMP: step 1/2. Plays an important role in the de novo pathway of purine nucleotide biosynthesis. Catalyzes the first committed step in the biosynthesis of AMP from IMP. This is Adenylosuccinate synthetase from Nautilia profundicola (strain ATCC BAA-1463 / DSM 18972 / AmH).